The primary structure comprises 1198 residues: Phosphatidylinositol-3,5-bisphosphate 3-phosphatase MTMR3 (1198 aa).

Serine 8 bears the Phosphoserine mark. One can recognise a Myotubularin phosphatase domain in the interval 155–576; sequence EHVTSRFKNE…RNLMLWSAVY (422 aa). The span at 265–280 shows a compositional bias: polar residues; that stretch reads SRSSGSKLSTRNTSRD. Positions 265-285 are disordered; sequence SRSSGSKLSTRNTSRDFPNGG. Residues asparagine 326, asparagine 351, and isoleucine 352 each contribute to the a 1,2-diacyl-sn-glycero-3-phospho-(1D-myo-inositol-3,5-bisphosphate) site. A 1,2-diacyl-sn-glycero-3-phospho-(1D-myo-inositol-3-phosphate) contacts are provided by asparagine 326, asparagine 351, and isoleucine 352. The active-site Phosphocysteine intermediate is the cysteine 413. Serine 414, aspartate 415, glycine 416, tryptophan 417, aspartate 418, arginine 419, lysine 455, and arginine 459 together coordinate a 1,2-diacyl-sn-glycero-3-phospho-(1D-myo-inositol-3,5-bisphosphate). A 1,2-diacyl-sn-glycero-3-phospho-(1D-myo-inositol-3-phosphate)-binding residues include serine 414, aspartate 415, glycine 416, tryptophan 417, aspartate 418, and arginine 419. Arginine 459 contacts a 1,2-diacyl-sn-glycero-3-phospho-(1D-myo-inositol-3-phosphate). Positions 590–612 are disordered; the sequence is CAPYPAPGTSPDDPPLSRLPKTR. The segment covering 593 to 603 has biased composition (pro residues); the sequence is YPAPGTSPDDP. Residues serine 613, serine 633, serine 647, and serine 651 each carry the phosphoserine modification. 3 disordered regions span residues 650–669, 716–735, and 855–891; these read LSSL…LGKP, EGKE…PEAS, and KSVS…SLVE. Over residues 716 to 732 the composition is skewed to basic and acidic residues; the sequence is EGKEDPLLEKESRRKTP. Phosphothreonine is present on threonine 731. Phosphoserine is present on residues serine 906 and serine 909. 2 disordered regions span residues 933–974 and 993–1019; these read ETEN…SRQL and WLHS…DDDG. Residues 999–1010 show a composition bias toward polar residues; it reads GRPSATSSPDQP. The stretch at 1029-1062 forms a coiled coil; that stretch reads QRLRQIESGHQQEVETLKKQVQELKSRLESQYLT. Residue serine 1064 is modified to Phosphoserine. Residues 1119–1179 form an FYVE-type zinc finger; it reads DHLAAHCYAC…VCKSCYSSLH (61 aa). 8 residues coordinate Zn(2+): cysteine 1125, cysteine 1128, cysteine 1141, cysteine 1144, cysteine 1149, cysteine 1152, cysteine 1171, and cysteine 1174.

The protein belongs to the protein-tyrosine phosphatase family. Non-receptor class myotubularin subfamily. As to quaternary structure, forms heterodimers with MTMR4 that recruit both CEP55 and PLK1; occurs during early mitosis, regulates the phosphorylation of CEP55 by PLK1 and its recruitment to the midbody where it mediates cell abscission. Phosphorylated by CDK1 during mitosis.

It is found in the cytoplasm. The protein localises to the cytosol. It localises to the membrane. It catalyses the reaction a 1,2-diacyl-sn-glycero-3-phospho-(1D-myo-inositol-3,5-bisphosphate) + H2O = a 1,2-diacyl-sn-glycero-3-phospho-(1D-myo-inositol-5-phosphate) + phosphate. It carries out the reaction a 1,2-diacyl-sn-glycero-3-phospho-(1D-myo-inositol-3-phosphate) + H2O = a 1,2-diacyl-sn-glycero-3-phospho-(1D-myo-inositol) + phosphate. The catalysed reaction is 1,2-dihexadecanoyl-sn-glycero-3-phospho-(1D-myo-inositol-3-phosphate) + H2O = 1,2-dihexadecanoyl-sn-glycero-3-phospho-(1D-myo-inositol) + phosphate. The enzyme catalyses 1,2-dioctanoyl-sn-glycero-3-phospho-(1-D-myo-inositol-3-phosphate) + H2O = 1,2-dioctanoyl-sn-glycero-3-phospho-(1D-myo-inositol) + phosphate. It catalyses the reaction 1,2-dihexadecanoyl-sn-glycero-3-phospho-(1D-myo-inositol-3,5-phosphate) + H2O = 1,2-dihexadecanoyl-sn-glycero-3-phospho-(1D-myo-inositol-5-phosphate) + phosphate. In terms of biological role, lipid phosphatase that specifically dephosphorylates the D-3 position of phosphatidylinositol 3-phosphate and phosphatidylinositol 3,5-bisphosphate, generating phosphatidylinositol and phosphatidylinositol 5-phosphate. Decreases the levels of phosphatidylinositol 3-phosphate, a phospholipid found in cell membranes where it acts as key regulator of both cell signaling and intracellular membrane traffic. Could also have a molecular sequestering/adapter activity and regulate biological processes independently of its phosphatase activity. It includes the regulation of midbody abscission during mitotic cytokinesis. The polypeptide is Phosphatidylinositol-3,5-bisphosphate 3-phosphatase MTMR3 (Homo sapiens (Human)).